The sequence spans 355 residues: Ribosomal RNA large subunit methyltransferase M (355 aa).

S-adenosyl-L-methionine contacts are provided by residues S191, 224–227 (APGG), D243, D263, and D279. The active-site Proton acceptor is K308.

This sequence belongs to the class I-like SAM-binding methyltransferase superfamily. RNA methyltransferase RlmE family. RlmM subfamily. Monomer.

It localises to the cytoplasm. It catalyses the reaction cytidine(2498) in 23S rRNA + S-adenosyl-L-methionine = 2'-O-methylcytidine(2498) in 23S rRNA + S-adenosyl-L-homocysteine + H(+). Catalyzes the 2'-O-methylation at nucleotide C2498 in 23S rRNA. This chain is Ribosomal RNA large subunit methyltransferase M, found in Stenotrophomonas maltophilia (strain R551-3).